A 151-amino-acid chain; its full sequence is Ubiquitin-conjugating enzyme E2 2 (151 aa).

A disordered region spans residues 1-26 (MSTTARRRLMRDFKRMQQDPPQGVSA). The UBC core domain occupies 4–150 (TARRRLMRDF…VRDTVEASWT (147 aa)). The active-site Glycyl thioester intermediate is the Cys88.

Belongs to the ubiquitin-conjugating enzyme family.

The protein localises to the cytoplasm. It is found in the nucleus. It catalyses the reaction S-ubiquitinyl-[E1 ubiquitin-activating enzyme]-L-cysteine + [E2 ubiquitin-conjugating enzyme]-L-cysteine = [E1 ubiquitin-activating enzyme]-L-cysteine + S-ubiquitinyl-[E2 ubiquitin-conjugating enzyme]-L-cysteine.. It participates in protein modification; protein ubiquitination. In terms of biological role, catalyzes the covalent attachment of ubiquitin to other proteins. Plays a role in transcription regulation by catalyzing the monoubiquitination of histone H2B to form H2BK123ub1. H2BK123ub1 gives a specific tag for epigenetic transcriptional activation and is also a prerequisite for H3K4me and H3K79me formation. Also involved in postreplication repair of UV-damaged DNA, in N-end rule-dependent protein degradation and in sporulation. The chain is Ubiquitin-conjugating enzyme E2 2 (UBC2) from Yarrowia lipolytica (strain CLIB 122 / E 150) (Yeast).